A 176-amino-acid polypeptide reads, in one-letter code: Caltractin (176 aa).

Residues 1–27 (MNRAAIAAGKPSGSISTGKPRRKTRAE) are disordered. EF-hand domains follow at residues 31 to 66 (EMKH…LGFD), 67 to 102 (VKKE…KISN), 104 to 139 (DPTE…LSEN), and 140 to 175 (ISDE…TSAF). Residues D44, D46, S48, R50, and E55 each contribute to the Ca(2+) site. Ca(2+)-binding residues include D153, D155, D157, E159, and D164.

It belongs to the centrin family. As to quaternary structure, monomer.

It localises to the cytoplasm. Its subcellular location is the cytoskeleton. The protein resides in the microtubule organizing center. The protein localises to the centrosome. Plays a fundamental role in microtubule-organizing center structure and function. This chain is Caltractin (CAL), found in Giardia intestinalis (Giardia lamblia).